Reading from the N-terminus, the 1133-residue chain is Sterol regulatory element-binding protein 1 (1133 aa).

Residues 1–60 form a transcriptional activation (acidic) region; sequence MDELPFGEAAVEQALDELGELDAALLTDIQDMLQLINNQDSDFPGLFDSPYAGGGAGDTE. The Cytoplasmic portion of the chain corresponds to 1–476; the sequence is MDELPFGEAA…HSHGMLDRSR (476 aa). Positions 27-35 match the 9aaTAD motif; it reads TDIQDMLQL. Positions 46-78 are disordered; the sequence is LFDSPYAGGGAGDTEPTSPGANSPESLSSPASL. Low complexity predominate over residues 68-78; sequence SPESLSSPASL. Phosphoserine is present on residues Ser-97 and Ser-116. Residues 131–219 form a disordered region; it reads LQPPAAQPSP…PLPASTAPRT (89 aa). The segment covering 165 to 180 has biased composition (polar residues); the sequence is SLPSGFSGTLPGNTQQ. Low complexity-rich tracts occupy residues 181-191 and 203-217; these read PPSSLSLASAP and QSSA…STAP. The segment at 227–486 is interaction with LMNA; it reads QRVPVVLQPH…LALCALVFLC (260 aa). The bHLH domain occupies 317 to 367; it reads EKRTAHNAIEKRYRSSINDKIVELKDLVVGTEAKLNKSAVLRKAIDYIRFL. A phosphoserine; by SIK1 mark is found at Ser-331 and Ser-332. Residues 367 to 388 are leucine-zipper; that stretch reads LQHSNQKLKQENLALRNAAHKS. Residue Ser-390 is modified to Phosphoserine; by AMPK. Ser-396 carries the phosphoserine; by SIK1 modification. The segment at 415–456 is disordered; that stretch reads VVDTLTPPPSDAGSPSQSSPLSLGSRGSSSGGSDSEPDSPVF. The span at 425–454 shows a compositional bias: low complexity; the sequence is DAGSPSQSSPLSLGSRGSSSGGSDSEPDSP. Residue Ser-449 is modified to Phosphoserine. Residues 477-497 form a helical membrane-spanning segment; that stretch reads LALCALVFLCLTCNPLASLFG. Topologically, residues 498 to 535 are lumenal; it reads WGIPGPSSASGAHHSSGRSMLEAESRDGSNWTQWLLPP. The chain crosses the membrane as a helical span at residues 536-556; that stretch reads LVWLANGLLVLACLALLFVYG. The Cytoplasmic portion of the chain corresponds to 557–1133; that stretch reads EPVTRPHTSP…LGGGTTVTSS (577 aa). Ser-1046 carries the phosphoserine modification.

This sequence belongs to the SREBP family. Efficient DNA binding of the soluble transcription factor fragment requires dimerization with another bHLH protein. Interacts with CEBPA, the interaction produces a transcriptional synergy. Interacts with LMNA. As to quaternary structure, forms a tight complex with SCAP, the SCAP-SREBP complex, in the endoplasmic reticulum membrane and the Golgi apparatus. Interacts with PAQR3; the interaction anchors the SCAP-SREBP complex to the Golgi apparatus in low cholesterol conditions. Post-translationally, processed in the Golgi apparatus, releasing the protein from the membrane. At low cholesterol the SCAP-SREBP complex is recruited into COPII vesicles for export from the endoplasmic reticulum. In the Golgi, complex SREBPs are cleaved sequentially by site-1 (MBTPS1, S1P) and site-2 (MBTPS2, S2P) proteases. The first cleavage by site-1 protease occurs within the luminal loop, the second cleavage by site-2 protease occurs within the first transmembrane domain, releasing the transcription factor from the Golgi membrane. In terms of processing, phosphorylated by AMPK, leading to suppress protein processing and nuclear translocation, and repress target gene expression. Phosphorylation at Ser-396 by SIK1 represses activity possibly by inhibiting DNA-binding. SCAP-free SREBF1 is ubiquitinated by the BCR(ARMC5) complex, leading to its degradation. Post-translationally, ubiquitinated; the nuclear form has a rapid turnover and is rapidly ubiquitinated and degraded by the proteasome in the nucleus.

The protein localises to the endoplasmic reticulum membrane. Its subcellular location is the golgi apparatus membrane. It localises to the cytoplasmic vesicle. The protein resides in the COPII-coated vesicle membrane. It is found in the nucleus. With respect to regulation, activation by cleavage is down-regulated upon activation of SIRT3-dependent PRKAA1/AMPK-alpha signaling cascade which leads to inhibition of ATP-consuming lipogenesis to restore cellular energy balance. Its function is as follows. Precursor of the transcription factor form (Processed sterol regulatory element-binding protein 1), which is embedded in the endoplasmic reticulum membrane. Low sterol concentrations promote processing of this form, releasing the transcription factor form that translocates into the nucleus and activates transcription of genes involved in cholesterol biosynthesis and lipid homeostasis. Key transcription factor that regulates expression of genes involved in cholesterol biosynthesis and lipid homeostasis. Binds to the sterol regulatory element 1 (SRE-1) (5'-ATCACCCCAC-3'). Has dual sequence specificity binding to both an E-box motif (5'-ATCACGTGA-3') and to SRE-1 (5'-ATCACCCCAC-3'). Regulates the promoters of genes involved in cholesterol biosynthesis and the LDL receptor (LDLR) pathway of sterol regulation. The polypeptide is Sterol regulatory element-binding protein 1 (Cricetulus griseus (Chinese hamster)).